Here is a 361-residue protein sequence, read N- to C-terminus: S-adenosylmethionine:tRNA ribosyltransferase-isomerase (361 aa).

This sequence belongs to the QueA family. As to quaternary structure, monomer.

It is found in the cytoplasm. It carries out the reaction 7-aminomethyl-7-carbaguanosine(34) in tRNA + S-adenosyl-L-methionine = epoxyqueuosine(34) in tRNA + adenine + L-methionine + 2 H(+). The protein operates within tRNA modification; tRNA-queuosine biosynthesis. Its function is as follows. Transfers and isomerizes the ribose moiety from AdoMet to the 7-aminomethyl group of 7-deazaguanine (preQ1-tRNA) to give epoxyqueuosine (oQ-tRNA). The polypeptide is S-adenosylmethionine:tRNA ribosyltransferase-isomerase (Actinobacillus pleuropneumoniae serotype 3 (strain JL03)).